The primary structure comprises 341 residues: UDP-N-acetylenolpyruvoylglucosamine reductase (341 aa).

The region spanning 13 to 185 (FGVEQSCLSM…TAVGLRLPKA (173 aa)) is the FAD-binding PCMH-type domain. Arg-161 is a catalytic residue. Ser-231 serves as the catalytic Proton donor. Glu-327 is a catalytic residue.

This sequence belongs to the MurB family. FAD is required as a cofactor.

It localises to the cytoplasm. The catalysed reaction is UDP-N-acetyl-alpha-D-muramate + NADP(+) = UDP-N-acetyl-3-O-(1-carboxyvinyl)-alpha-D-glucosamine + NADPH + H(+). It participates in cell wall biogenesis; peptidoglycan biosynthesis. Its function is as follows. Cell wall formation. This is UDP-N-acetylenolpyruvoylglucosamine reductase from Shewanella sp. (strain MR-7).